We begin with the raw amino-acid sequence, 553 residues long: Cytochrome P450 86A22 (553 aa).

Residues 8-24 form a helical membrane-spanning segment; sequence MIVAIVAAYLLWFKSIT. C459 serves as a coordination point for heme.

Belongs to the cytochrome P450 family. Heme is required as a cofactor. Mostly expressed in the developing stigma of floral buds. Weakly detected in leaves, stems and flowers.

The protein localises to the membrane. The enzyme catalyses (9Z)-octadecenoyl-CoA + reduced [NADPH--hemoprotein reductase] + O2 = (9Z)-18-hydroxyoctadecenoyl-CoA + oxidized [NADPH--hemoprotein reductase] + H2O + H(+). It carries out the reaction (9Z,12Z)-octadecadienoyl-CoA + reduced [NADPH--hemoprotein reductase] + O2 = (9Z,12Z)-18-hydroxyoctadecadienoyl-CoA + oxidized [NADPH--hemoprotein reductase] + H2O + H(+). Fatty acyl-CoA omega-hydroxylase essential for the production of omega-hydroxy fatty acids and the biosynthesis of triacylglycerol-/diacylglycerol-based estolide polyesters in the stigma. Substrate preference is 16:0-CoA &gt; 18:1-CoA &gt; 18:0-CoA. The chain is Cytochrome P450 86A22 from Petunia hybrida (Petunia).